The following is a 185-amino-acid chain: NADH-quinone oxidoreductase subunit B (185 aa).

Residues Cys64, Cys65, Cys129, and Cys159 each coordinate [4Fe-4S] cluster.

The protein belongs to the complex I 20 kDa subunit family. NDH-1 is composed of 14 different subunits. Subunits NuoB, C, D, E, F, and G constitute the peripheral sector of the complex. The cofactor is [4Fe-4S] cluster.

Its subcellular location is the cell inner membrane. It carries out the reaction a quinone + NADH + 5 H(+)(in) = a quinol + NAD(+) + 4 H(+)(out). Its function is as follows. NDH-1 shuttles electrons from NADH, via FMN and iron-sulfur (Fe-S) centers, to quinones in the respiratory chain. Couples the redox reaction to proton translocation (for every two electrons transferred, four hydrogen ions are translocated across the cytoplasmic membrane), and thus conserves the redox energy in a proton gradient. The polypeptide is NADH-quinone oxidoreductase subunit B (Rhodospirillum rubrum (strain ATCC 11170 / ATH 1.1.1 / DSM 467 / LMG 4362 / NCIMB 8255 / S1)).